Reading from the N-terminus, the 357-residue chain is Putative lipopolysaccharide heptosyltransferase 4 (357 aa).

It carries out the reaction alpha-D-Glc-(1-&gt;2)-alpha-D-Glc-(1-&gt;3)-[alpha-D-Gal-(1-&gt;6)]-alpha-D-Glc-(1-&gt;3)-[L-alpha-D-Hep-(1-&gt;7)]-4-O-PO3(2-)-L-alpha-D-Hep-(1-&gt;3)-4-O-PO3(2-)-L-alpha-D-Hep-(1-&gt;5)-[alpha-Kdo-(2-&gt;4)]-alpha-Kdo-(2-&gt;6)-lipid A + ADP-L-glycero-beta-D-manno-heptose = lipid A-core + ADP + H(+). The protein operates within bacterial outer membrane biogenesis; LPS core biosynthesis. In terms of biological role, transferase involved in the biosynthesis of the core oligosaccharide region of lipopolysaccharide (LPS). May catalyze the addition of the terminal heptose (heptose IV) to the outer-core glucose III, the last step of the lipid A-core oligosaccharide biosynthesis. The sequence is that of Putative lipopolysaccharide heptosyltransferase 4 from Escherichia coli (strain K12).